Consider the following 142-residue polypeptide: gSG7 salivary protein (142 aa).

The signal sequence occupies residues 1-26; that stretch reads MAVRMTVILPLAMALICLMQAEPATA. Cystine bridges form between Cys-84–Cys-139 and Cys-107–Cys-117.

Associates with activated host C3-convertase complex C3bBb (C3-CFB). Interacts with host properdin (CFP), a regulator of the alternate pathway of complement. In terms of tissue distribution, female salivary gland (at protein level).

It is found in the secreted. Its function is as follows. Salivary protein that potently inhibits the alternative pathway of complement system activation in the host while having no inhibitory effect on the classical or lectin pathways. Binds and stabilizes activated host C3-convertase complex C3bBb (C3-CFB) and inhibits its convertase activity. Enhances accumulation of C3bBb on immobilized properdin. The chain is gSG7 salivary protein from Anopheles albimanus (New world malaria mosquito).